The sequence spans 412 residues: tRNA pseudouridine synthase Pus10 (412 aa).

The THUMP domain occupies 73-197 (HEPSIKFLSN…TGSVEVQIMP (125 aa)). 2 residues coordinate substrate: tyrosine 308 and tyrosine 376.

This sequence belongs to the pseudouridine synthase Pus10 family.

It catalyses the reaction uridine(54) in tRNA = pseudouridine(54) in tRNA. The enzyme catalyses uridine(55) in tRNA = pseudouridine(55) in tRNA. In terms of biological role, responsible for synthesis of pseudouridine from uracil-54 and uracil-55 in the psi GC loop of transfer RNAs. This Vulcanisaeta distributa (strain DSM 14429 / JCM 11212 / NBRC 100878 / IC-017) protein is tRNA pseudouridine synthase Pus10.